The chain runs to 506 residues: ATP-dependent rRNA helicase RRP3 (506 aa).

Disordered stretches follow at residues 1–22 (MSGK…KSKE) and 37–88 (NQKK…FESF). Positions 49 to 69 (SDQEDDPSESEEEEGSDSEDV) are enriched in acidic residues. The Q motif signature appears at 86 to 114 (ESFSDLDLVPELIEACKNLNFAKPTPIQA). The 173-residue stretch at 117–289 (IPPALQGHDI…RASLTNPVKC (173 aa)) folds into the Helicase ATP-binding domain. 130–137 (AQTGSGKT) lines the ATP pocket. The DEAD box signature appears at 236-239 (DEAD). The region spanning 312–460 (LKNTYLIYLM…KENVNKDAIL (149 aa)) is the Helicase C-terminal domain. The tract at residues 485-506 (IARGKGRRGRMAARDDMDKGER) is disordered. The span at 496 to 506 (AARDDMDKGER) shows a compositional bias: basic and acidic residues.

Belongs to the DEAD box helicase family. DDX47/RRP3 subfamily. As to quaternary structure, interacts with the SSU processome.

It is found in the nucleus. It catalyses the reaction ATP + H2O = ADP + phosphate + H(+). Functionally, ATP-dependent rRNA helicase required for pre-ribosomal RNA processing. Involved in the maturation of the 35S-pre-rRNA and to its cleavage to mature 18S rRNA. In Vanderwaltozyma polyspora (strain ATCC 22028 / DSM 70294 / BCRC 21397 / CBS 2163 / NBRC 10782 / NRRL Y-8283 / UCD 57-17) (Kluyveromyces polysporus), this protein is ATP-dependent rRNA helicase RRP3.